We begin with the raw amino-acid sequence, 397 residues long: Tryptophan synthase beta chain (397 aa).

Lys87 bears the N6-(pyridoxal phosphate)lysine mark.

Belongs to the TrpB family. Tetramer of two alpha and two beta chains. Pyridoxal 5'-phosphate serves as cofactor.

It catalyses the reaction (1S,2R)-1-C-(indol-3-yl)glycerol 3-phosphate + L-serine = D-glyceraldehyde 3-phosphate + L-tryptophan + H2O. It functions in the pathway amino-acid biosynthesis; L-tryptophan biosynthesis; L-tryptophan from chorismate: step 5/5. Functionally, the beta subunit is responsible for the synthesis of L-tryptophan from indole and L-serine. In Escherichia fergusonii (strain ATCC 35469 / DSM 13698 / CCUG 18766 / IAM 14443 / JCM 21226 / LMG 7866 / NBRC 102419 / NCTC 12128 / CDC 0568-73), this protein is Tryptophan synthase beta chain.